A 300-amino-acid polypeptide reads, in one-letter code: 17-beta-hydroxysteroid dehydrogenase 13 (300 aa).

A signal peptide spans 1 to 19 (MNIILEILLLLITIIYSYL). Ser33 bears the Phosphoserine mark. Residue 40-67 (LITGAGHGIGRQTTYEFAKRQSILVLWD) coordinates NAD(+). Ser172 is a binding site for substrate. The active-site Proton acceptor is the Tyr185. Lys189 is a binding site for NAD(+).

This sequence belongs to the short-chain dehydrogenases/reductases (SDR) family. Highly expressed in the liver. Also detected in ovary, bone marrow, kidney, brain, lung, skeletal muscle, bladder and testis.

Its subcellular location is the lipid droplet. The protein resides in the endoplasmic reticulum. It localises to the cytoplasm. It catalyses the reaction 17beta-estradiol + NAD(+) = estrone + NADH + H(+). The catalysed reaction is all-trans-retinol + NAD(+) = all-trans-retinal + NADH + H(+). It carries out the reaction all-trans-retinal + NAD(+) + H2O = all-trans-retinoate + NADH + 2 H(+). Its function is as follows. Plays a pivotal role in hepatic lipid metabolism. In vitro, it catalyzes the oxidation of a variety of lipid substrates, including 17beta-estradiol, retinol, retinal, and leukotriene B4. In terms of biological role, has retinol/retinal dehydrogenase activity in vitro. Does not have retinol/retinal dehydrogenase activity in vitro. The sequence is that of 17-beta-hydroxysteroid dehydrogenase 13 from Homo sapiens (Human).